Consider the following 186-residue polypeptide: Ribosome-recycling factor (186 aa).

The protein belongs to the RRF family.

It localises to the cytoplasm. Its function is as follows. Responsible for the release of ribosomes from messenger RNA at the termination of protein biosynthesis. May increase the efficiency of translation by recycling ribosomes from one round of translation to another. The sequence is that of Ribosome-recycling factor from Bartonella bacilliformis (strain ATCC 35685 / KC583 / Herrer 020/F12,63).